The chain runs to 171 residues: Protein TIFY 11d (171 aa).

The region spanning 65-100 (PSAGTAPLTIFYDGRMVVVDDVPVEKAAELMRLAGS) is the Tify domain. The short motif at 117–142 (PIARKASLQRFLQKRKHRITTTSEPY) is the Jas element. The Nuclear localization signal motif lies at 119–126 (ARKASLQR).

This sequence belongs to the TIFY/JAZ family. In terms of assembly, interacts with BHLH148 and COI1A. Interacts with COI1A, COI1B and COI2 in a coronatine-dependent manner. Coronatine is an analog of jasmonoyl isoleucine (JA-Ile). Post-translationally, ubiquitinated. Increase in jasmonoyl isoleucine (JA-Ile) levels mediates its degradation via COI1A-mediated proteasome pathway.

Its subcellular location is the nucleus. Functionally, repressor of jasmonate (JA) responses. May act on an initial response of JA-regulated gene expression toward drought tolerance as part of a BHLH148-TIFY11D/JAZ12-COI1A complex. The polypeptide is Protein TIFY 11d (Oryza sativa subsp. japonica (Rice)).